A 97-amino-acid polypeptide reads, in one-letter code: Secreted transmembrane peptide 4 (97 aa).

An N-terminal signal peptide occupies residues Met-1 to Ser-33. An SCOOP motif motif is present at residues Ile-54 to Pro-67. The SxS motif essential for MIK2 binding motif lies at Ser-60–Ser-62. The segment at Trp-75–Pro-97 is disordered.

Belongs to the serine rich endogenous peptide (SCOOP) phytocytokine family. Interacts with MIK2 (via extracellular leucine-rich repeat domain); this interaction triggers the formation of complex between MIK2 and the BAK1/SERK3 and SERK4 coreceptors, and subsequent BAK1 activation by phosphorylation. As to expression, mostly expressed in leaves and stems, and, to a lower extent, in roots, siliques, seeds and flowers.

It localises to the cell membrane. The protein resides in the secreted. It is found in the extracellular space. Its subcellular location is the apoplast. In terms of biological role, brassicaceae-specific phytocytokine (plant endogenous peptide released into the apoplast) perceived by MIK2 in a BAK1/SERK3 and SERK4 coreceptors-dependent manner, that modulates various physiological and antimicrobial processes including growth prevention and reactive oxygen species (ROS) response regulation. Prevents general growth and development. This is Secreted transmembrane peptide 4 from Arabidopsis thaliana (Mouse-ear cress).